We begin with the raw amino-acid sequence, 132 residues long: Global transcriptional regulator Spx (132 aa).

The cysteines at positions 10 and 13 are disulfide-linked.

Belongs to the ArsC family. Spx subfamily. In terms of assembly, interacts with the C-terminal domain of the alpha subunit of the RNAP.

Its subcellular location is the cytoplasm. Global transcriptional regulator that plays a key role in stress response and exerts either positive or negative regulation of genes. Acts by interacting with the C-terminal domain of the alpha subunit of the RNA polymerase (RNAP). This interaction can enhance binding of RNAP to the promoter region of target genes and stimulate their transcription, or block interaction of RNAP with activator. In Enterococcus faecalis (strain ATCC 700802 / V583), this protein is Global transcriptional regulator Spx.